An 88-amino-acid chain; its full sequence is Class I hydrophobin F (88 aa).

The N-terminal stretch at 1 to 21 (MLSRLFTVPAILLATLGSAAT) is a signal peptide. Cystine bridges form between Cys-30/Cys-67, Cys-34/Cys-58, Cys-35/Cys-51, and Cys-68/Cys-84.

This sequence belongs to the fungal hydrophobin family.

It localises to the secreted. Its subcellular location is the cell wall. The protein localises to the vacuole. It is found in the cytoplasmic vesicle. Its function is as follows. Aerial growth, conidiation, and dispersal of filamentous fungi in the environment rely upon a capability of their secreting small amphipathic proteins called hydrophobins (HPBs) with low sequence identity. Class I can self-assemble into an outermost layer of rodlet bundles on aerial cell surfaces, conferring cellular hydrophobicity that supports fungal growth, development and dispersal; whereas Class II form highly ordered films at water-air interfaces through intermolecular interactions but contribute nothing to the rodlet structure. Hyd1F contributes to certain cell wall-related features, such as hydrophobicity but is not involved in cell wall-related events during fungal proliferation in host hemocoel. Does not contribute to conidial hydrophobicity. This chain is Class I hydrophobin F, found in Beauveria bassiana (strain ARSEF 2860) (White muscardine disease fungus).